The primary structure comprises 103 residues: Putative protein YmfH (103 aa).

Positions Met1–Gly34 are disordered. Residues Val10–Val20 are compositionally biased toward basic and acidic residues. A run of 2 helical transmembrane segments spans residues Met42 to Phe62 and Gly73 to Glu93.

It is found in the cell inner membrane. The protein is Putative protein YmfH (ymfH) of Escherichia coli (strain K12).